The sequence spans 246 residues: DNA repair protein RecO (246 aa).

This sequence belongs to the RecO family.

Its function is as follows. Involved in DNA repair and RecF pathway recombination. In Bifidobacterium adolescentis (strain ATCC 15703 / DSM 20083 / NCTC 11814 / E194a), this protein is DNA repair protein RecO.